A 673-amino-acid polypeptide reads, in one-letter code: MVVKLMIDFFLKSEYLPAGDQPKAIKEIENSILLGNKYQTLKGVTGSGKTFTIANIIKDLNRPALVVSHNKTLAAQLYREFKDFFPNNAVEYFVSYYDYYQPESYVPSKDLFIEKEATINTEIEIKRIRTVTSLAKRRDVIVVATVSSIYALGSPDFFKKSAREFFVGQKISIKEISDIFVELYYERTLMNLERDKFSIKGDIVEIWPSSEHGEFAYRICLDFDEIVEIYRVSSFSKKNLGATNSFTLFAKSYFVIPYENVLEAIPKISHDLSLQCQYFKDNGKLVEAERLKQRVEYDLEMLRETGFCSGIENYSKYLSGSTMERPYCLFDFFPKDXLLFVDESHVTLPQFRGMYNGDHSRKLNLVNFGFRLPAALENRPLKYDEFEALINQVVFVSATPGVEENEKSSVVVDQIIRPTGLVDPEIITRHSDGQMEDLYSEIQKRVALKERVLITTLTKKMSEDLTEYLVNLGVRAKYLHSELDTLERVEVISLLRKSEIDVIVGINLLREGLDIPEVSLVAILDADKVGFLRSTTSLIQTIGRAARNSNGLVIMYYDKISLAMREAIEETNRRRQIQIDYNKKNNITPKTIVKKIQNILEKELNNKNKNVGYDFEKIISGERLSKKKLIDKLKFDLEEAVNDERFEDAIVLRDKIKELSSKISIARNKKREV.

The Helicase ATP-binding domain occupies 30–417 (NSILLGNKYQ…SSVVVDQIIR (388 aa)). 43–50 (GVTGSGKT) provides a ligand contact to ATP. The Beta-hairpin motif lies at 96–119 (YYDYYQPESYVPSKDLFIEKEATI). The Helicase C-terminal domain maps to 434 to 600 (QMEDLYSEIQ…TIVKKIQNIL (167 aa)). The UVR domain occupies 627–662 (KKLIDKLKFDLEEAVNDERFEDAIVLRDKIKELSSK).

It belongs to the UvrB family. Forms a heterotetramer with UvrA during the search for lesions. Interacts with UvrC in an incision complex.

The protein localises to the cytoplasm. The UvrABC repair system catalyzes the recognition and processing of DNA lesions. A damage recognition complex composed of 2 UvrA and 2 UvrB subunits scans DNA for abnormalities. Upon binding of the UvrA(2)B(2) complex to a putative damaged site, the DNA wraps around one UvrB monomer. DNA wrap is dependent on ATP binding by UvrB and probably causes local melting of the DNA helix, facilitating insertion of UvrB beta-hairpin between the DNA strands. Then UvrB probes one DNA strand for the presence of a lesion. If a lesion is found the UvrA subunits dissociate and the UvrB-DNA preincision complex is formed. This complex is subsequently bound by UvrC and the second UvrB is released. If no lesion is found, the DNA wraps around the other UvrB subunit that will check the other stand for damage. This is UvrABC system protein B from Borreliella burgdorferi (strain ATCC 35210 / DSM 4680 / CIP 102532 / B31) (Borrelia burgdorferi).